The following is a 93-amino-acid chain: Large ribosomal subunit protein bL27 (93 aa).

The tract at residues 1 to 22 (MAHKKAGGSSRNGRDSAGRRLG) is disordered.

Belongs to the bacterial ribosomal protein bL27 family.

This is Large ribosomal subunit protein bL27 from Parvibaculum lavamentivorans (strain DS-1 / DSM 13023 / NCIMB 13966).